A 132-amino-acid polypeptide reads, in one-letter code: L-ectoine synthase (132 aa).

It belongs to the ectoine synthase family.

It carries out the reaction (2S)-4-acetamido-2-aminobutanoate = L-ectoine + H2O. It participates in amine and polyamine biosynthesis; ectoine biosynthesis; L-ectoine from L-aspartate 4-semialdehyde: step 3/3. Catalyzes the circularization of gamma-N-acetyl-alpha,gamma-diaminobutyric acid (ADABA) to ectoine (1,4,5,6-tetrahydro-2-methyl-4-pyrimidine carboxylic acid), which is an excellent osmoprotectant. This Hahella chejuensis (strain KCTC 2396) protein is L-ectoine synthase.